Here is a 327-residue protein sequence, read N- to C-terminus: DNA-directed RNA polymerase subunit alpha (327 aa).

An alpha N-terminal domain (alpha-NTD) region spans residues 1–243 (MEKFLKYEIK…EHLNPIVNVN (243 aa)). The tract at residues 260-327 (RVRSFAKQIE…VHELGLKLRS (68 aa)) is alpha C-terminal domain (alpha-CTD).

Belongs to the RNA polymerase alpha chain family. Homodimer. The RNAP catalytic core consists of 2 alpha, 1 beta, 1 beta' and 1 omega subunit. When a sigma factor is associated with the core the holoenzyme is formed, which can initiate transcription.

The catalysed reaction is RNA(n) + a ribonucleoside 5'-triphosphate = RNA(n+1) + diphosphate. DNA-dependent RNA polymerase catalyzes the transcription of DNA into RNA using the four ribonucleoside triphosphates as substrates. This chain is DNA-directed RNA polymerase subunit alpha, found in Mycoplasma pneumoniae (strain ATCC 29342 / M129 / Subtype 1) (Mycoplasmoides pneumoniae).